Consider the following 159-residue polypeptide: Photosystem I reaction center subunit XI (159 aa).

3 consecutive transmembrane segments (helical) span residues 53-73, 84-104, and 125-145; these read LEIG…LGPL, LISG…YGIV, and FTAG…TLLE.

The protein belongs to the PsaL family.

The protein resides in the cellular thylakoid membrane. This Cyanothece sp. (strain PCC 7425 / ATCC 29141) protein is Photosystem I reaction center subunit XI.